Reading from the N-terminus, the 359-residue chain is Flavonoid 8-O-methyltransferase 1 (359 aa).

D223 serves as a coordination point for S-adenosyl-L-methionine. Residue H261 is the Proton acceptor of the active site.

Belongs to the class I-like SAM-binding methyltransferase superfamily. Cation-independent O-methyltransferase family. Expressed in leaves and trichomes, especially in cv. SD and cv. EMX-1, but barely in cv. MC and cv. SW.

The catalysed reaction is an 8-hydroxyflavone + S-adenosyl-L-methionine = an 8-methoxyflavone + S-adenosyl-L-homocysteine + H(+). It carries out the reaction 4',7,8-trihydroxyflavone + S-adenosyl-L-methionine = 4',7-dihydroxy-8-methoxyflavone + S-adenosyl-L-homocysteine + H(+). The enzyme catalyses 7,8-dihydroxyflavone + S-adenosyl-L-methionine = 7-hydroxy-8-methoxyflavone + S-adenosyl-L-homocysteine + H(+). It catalyses the reaction 3',4',7,8-tetrahydroxyflavone + S-adenosyl-L-methionine = 3',4,7-trihydroxy-8-methoxyflavone + S-adenosyl-L-homocysteine + H(+). It functions in the pathway flavonoid metabolism. Its activity is regulated as follows. Strongly inhibited by gardenin B (GARD B). Its function is as follows. Cation-independent flavonoid 8-O-methyltransferase involved in the biosynthesis of polymethoxylated flavonoids natural products such as nevadensin and salvigenin, aroma compounds which contribute to the flavor of sweet basil, and exhibit pharmacological activities such as anti-allergic, anti-oxidant, antibacterial, anti-proliferative, and anti-inflammatory effects. Catalyzes S-adenosylmethionine-dependent regioselective 8-O-methylation of flavonoids; mediates likely the conversion of pilosin (PIL) to nevadensin (NEV) and of 8-hydroxysalvigenin (8-OH-SALV) to gardenin B (GARD B). Can also use 3',4',7,8-tetrahydroxyflavone as substrate. Accepts other unnatural O-diphenols including 7,8,4'-trihydroxy-flavone and 7-O-methyl-8-hydroxy-flavone, and, with a lower efficiency, 7,8-dihydroxy-flavone, as substrates. The chain is Flavonoid 8-O-methyltransferase 1 from Ocimum basilicum (Sweet basil).